The chain runs to 356 residues: MLLDRYLLSRFLGIFLNVSFVSVLLVSLYALLDFLVGFKEKRTDVALSYFLNILPLGFYYISFITLSISLILFLRKVFEKKMELTVQSFGISPLRFSLPVLLFSVFLSSTFLLGNEYAFPKLLGNLWFIEKNYKKKQEVKGFIKNFWFIKKENEVKTYYHVGNLNLSDGSLFNFYTMKVERKNLNPLEVLKVFSGVWKDKEIFIRSGEIYDFEKGKREKVFNKTFKLGLSIKEVELFSEKIDFLSLSEIFFLMQKSKKVGLNVDVYTGELFYRVMFSLSPVFISIFSLYLFFKHKVLSQVIPRFLVFIVILWLVILSPKILPQKANQPVLYSLIPIFLLILYSLKGVYDLRKGFRV.

Transmembrane regions (helical) follow at residues 7 to 29, 49 to 71, 91 to 113, 270 to 292, 299 to 316, and 329 to 348; these read LLSRFLGIFLNVSFVSVLLVSLY, YFLNILPLGFYYISFITLSISLI, ISPLRFSLPVLLFSVFLSSTFLL, LFYRVMFSLSPVFISIFSLYLFF, QVIPRFLVFIVILWLVIL, and VLYSLIPIFLLILYSLKGVY.

It localises to the cell membrane. This is an uncharacterized protein from Aquifex aeolicus (strain VF5).